A 231-amino-acid chain; its full sequence is Flagellar L-ring protein (231 aa).

Residues 1 to 18 (MKHLLSVFALGGAVLLAG) form the signal peptide. The N-palmitoyl cysteine moiety is linked to residue cysteine 19. Cysteine 19 is lipidated: S-diacylglycerol cysteine.

The protein belongs to the FlgH family. In terms of assembly, the basal body constitutes a major portion of the flagellar organelle and consists of four rings (L,P,S, and M) mounted on a central rod.

The protein localises to the cell outer membrane. It is found in the bacterial flagellum basal body. Its function is as follows. Assembles around the rod to form the L-ring and probably protects the motor/basal body from shearing forces during rotation. The chain is Flagellar L-ring protein from Pseudomonas entomophila (strain L48).